Here is a 318-residue protein sequence, read N- to C-terminus: MASRGVASYRTEVWSDWCPGCGDFGILAAMQKAFAELNLDPAQTVVVSGIGCSSKTPHFINVNGVHTIHGRGIAFATGIKLANPQLKVIVNGGDGDLLGIGVAHFVALGRRNLDVTVLIHNNKVYGLTKGQASPTLRRGEKVKSLPVPNLQDAVNPIALAIASGYTFVARAYSLWVDHLKEILKAAINHKGSAVIDVLQPCVTYNDIYTAEFYKDRLYKLEDDPSWDPIVRDPSEDEEKKAAAIKKAEEWGTRIPVGVFYVNPLKDTYEERLAQRNPSYSIDNPPALQPISREDGSPIVGPDEFRKIFKRFIVNVKKL.

The [4Fe-4S] cluster site is built by Cys-18, Cys-21, and Cys-52. Thiamine diphosphate-binding positions include Ile-50–Ser-53 and His-69. Mg(2+) is bound at residue Asp-94. Gly-95 to Asp-96 provides a ligand contact to thiamine diphosphate. Residues Asn-122 and Val-124 each contribute to the Mg(2+) site. Thiamine diphosphate is bound at residue Gly-126–Leu-127. Cys-201 serves as a coordination point for [4Fe-4S] cluster.

In terms of assembly, heterodimer composed of an alpha and a beta subunit. The cofactor is [4Fe-4S] cluster. It depends on thiamine diphosphate as a cofactor. Mg(2+) is required as a cofactor.

It catalyses the reaction a 2-oxocarboxylate + 2 oxidized [2Fe-2S]-[ferredoxin] + CoA = an acyl-CoA + 2 reduced [2Fe-2S]-[ferredoxin] + CO2 + H(+). Functionally, catalyzes the coenzyme A-dependent oxidative decarboxylation of different 2-oxoacids such as pyruvate, 2-oxobutyrate and glyoxylate to form their CoA derivatives. This is 2-oxoacid:ferredoxin oxidoreductase 1, subunit beta from Aeropyrum pernix (strain ATCC 700893 / DSM 11879 / JCM 9820 / NBRC 100138 / K1).